The following is a 327-amino-acid chain: Malate dehydrogenase (327 aa).

12 to 18 (GAAGQIG) provides a ligand contact to NAD(+). The substrate site is built by arginine 93 and arginine 99. NAD(+) contacts are provided by residues asparagine 106, glutamine 113, and 130–132 (VGN). Positions 132 and 163 each coordinate substrate. The active-site Proton acceptor is the histidine 188.

It belongs to the LDH/MDH superfamily. MDH type 2 family.

The enzyme catalyses (S)-malate + NAD(+) = oxaloacetate + NADH + H(+). Catalyzes the reversible oxidation of malate to oxaloacetate. The sequence is that of Malate dehydrogenase from Cupriavidus metallidurans (strain ATCC 43123 / DSM 2839 / NBRC 102507 / CH34) (Ralstonia metallidurans).